A 90-amino-acid polypeptide reads, in one-letter code: Defensin-like protein 293 (90 aa).

A signal peptide spans 1 to 26 (MTSRAKSLFIFFFLISCTFMLLETDA). 3 disulfides stabilise this stretch: cysteine 63–cysteine 83, cysteine 69–cysteine 88, and cysteine 75–cysteine 90.

This sequence belongs to the DEFL family.

The protein localises to the secreted. This chain is Defensin-like protein 293, found in Arabidopsis thaliana (Mouse-ear cress).